We begin with the raw amino-acid sequence, 203 residues long: Probable deoxycytidylate deaminase (203 aa).

In terms of domain architecture, CMP/dCMP-type deaminase spans 27-163 (HWDDYFMATS…PTYRASKRML (137 aa)). His102 serves as a coordination point for Zn(2+). Residue Glu104 is the Proton donor of the active site. Residues Cys128 and Cys131 each coordinate Zn(2+).

The protein belongs to the cytidine and deoxycytidylate deaminase family. Zn(2+) serves as cofactor.

It carries out the reaction dCMP + H2O + H(+) = dUMP + NH4(+). In terms of biological role, supplies the nucleotide substrate for thymidylate synthetase. This chain is Probable deoxycytidylate deaminase, found in Drosophila melanogaster (Fruit fly).